The primary structure comprises 264 residues: Thiazole synthase (264 aa).

Lys-106 (schiff-base intermediate with DXP) is an active-site residue. 1-deoxy-D-xylulose 5-phosphate contacts are provided by residues Gly-167, 193–194 (AG), and 215–216 (NS).

The protein belongs to the ThiG family. As to quaternary structure, homotetramer. Forms heterodimers with either ThiH or ThiS.

Its subcellular location is the cytoplasm. The catalysed reaction is [ThiS sulfur-carrier protein]-C-terminal-Gly-aminoethanethioate + 2-iminoacetate + 1-deoxy-D-xylulose 5-phosphate = [ThiS sulfur-carrier protein]-C-terminal Gly-Gly + 2-[(2R,5Z)-2-carboxy-4-methylthiazol-5(2H)-ylidene]ethyl phosphate + 2 H2O + H(+). It participates in cofactor biosynthesis; thiamine diphosphate biosynthesis. In terms of biological role, catalyzes the rearrangement of 1-deoxy-D-xylulose 5-phosphate (DXP) to produce the thiazole phosphate moiety of thiamine. Sulfur is provided by the thiocarboxylate moiety of the carrier protein ThiS. In vitro, sulfur can be provided by H(2)S. The protein is Thiazole synthase of Prochlorococcus marinus (strain MIT 9215).